The chain runs to 689 residues: Glycine--tRNA ligase beta subunit (689 aa).

The protein belongs to the class-II aminoacyl-tRNA synthetase family. In terms of assembly, tetramer of two alpha and two beta subunits.

It is found in the cytoplasm. The catalysed reaction is tRNA(Gly) + glycine + ATP = glycyl-tRNA(Gly) + AMP + diphosphate. The polypeptide is Glycine--tRNA ligase beta subunit (Yersinia pseudotuberculosis serotype O:1b (strain IP 31758)).